The primary structure comprises 330 residues: Membrane-associated protein VIPP1, chloroplastic (330 aa).

A chloroplast-targeting transit peptide spans 1–64 (MALKASPVTG…LRLACDNRLR (64 aa)). Coiled-coil stretches lie at residues 124–259 (SQKQ…LTQI) and 312–329 (KDSEIENELNELRRKAND). The tract at residues 287–312 (LSGSSKKGELPPGRSTVAASTRYPFK) is disordered.

It belongs to the PspA/Vipp/IM30 family. As to quaternary structure, homomultimer. Complex formation involves interaction via the central alpha-helical domain (71-286).

The protein resides in the plastid. Its subcellular location is the chloroplast inner membrane. It is found in the chloroplast thylakoid membrane. Functionally, required for plastid vesicle formation and thylakoid membrane biogenesis, but not for functional assembly of thylakoid protein complexes. This is Membrane-associated protein VIPP1, chloroplastic from Arabidopsis thaliana (Mouse-ear cress).